Here is a 206-residue protein sequence, read N- to C-terminus: Small ribosomal subunit protein uS4 (206 aa).

Residues 29-52 (LDKRPYAPGQHGQRRGRGRPSDYS) form a disordered region. In terms of domain architecture, S4 RNA-binding spans 96–171 (RRLDNVVFRM…QKRRRVSPWV (76 aa)).

It belongs to the universal ribosomal protein uS4 family. Part of the 30S ribosomal subunit. Contacts protein S5. The interaction surface between S4 and S5 is involved in control of translational fidelity.

In terms of biological role, one of the primary rRNA binding proteins, it binds directly to 16S rRNA where it nucleates assembly of the body of the 30S subunit. Its function is as follows. With S5 and S12 plays an important role in translational accuracy. This Deinococcus deserti (strain DSM 17065 / CIP 109153 / LMG 22923 / VCD115) protein is Small ribosomal subunit protein uS4.